We begin with the raw amino-acid sequence, 144 residues long: Conopressin-conophysin (144 aa).

An N-terminal signal peptide occupies residues 1–27 (MTRSALQMGRLTLVLCLLLQLVLVTQA). Cysteines 28 and 33 form a disulfide. At aspartate 36 the chain carries Aspartic acid 1-amide. Positions 37-44 (GERDVDGR) are excised as a propeptide. Cystine bridges form between cysteine 50/cysteine 90, cysteine 53/cysteine 64, cysteine 58/cysteine 80, cysteine 65/cysteine 70, cysteine 97/cysteine 117, cysteine 109/cysteine 129, and cysteine 118/cysteine 123. The propeptide occupies 131–144 (KESKSGIRVGCQRS).

Belongs to the vasopressin/oxytocin family. Expressed by the venom duct.

The protein resides in the secreted. The protein is Conopressin-conophysin of Conus bayani (Bayan's cone).